We begin with the raw amino-acid sequence, 294 residues long: Nucleotide-binding protein Dde_1774 (294 aa).

Residue 14 to 21 coordinates ATP; that stretch reads GLSGAGKS. Residue 66–69 participates in GTP binding; that stretch reads DLRQ.

This sequence belongs to the RapZ-like family.

Its function is as follows. Displays ATPase and GTPase activities. This is Nucleotide-binding protein Dde_1774 from Oleidesulfovibrio alaskensis (strain ATCC BAA-1058 / DSM 17464 / G20) (Desulfovibrio alaskensis).